A 366-amino-acid chain; its full sequence is Terpene cyclase-like protein flvF (366 aa).

The protein belongs to the terpene synthase family. Homodimer.

It carries out the reaction N,N-dimethyl-cadaverine + 2,6,9-trimethyl-13-oxatetracyclo[6.3.1.1(6,9).0(1,5)]tridecane carbocation = pre-flavunoidine + H(+). Its pathway is secondary metabolite biosynthesis; terpenoid biosynthesis. Its function is as follows. Terpene cyclase-like protein; part of the gene cluster that mediates the biosynthesis of flavunoidine, an alkaloidal terpenoid with a tetracyclic cage-like core connected to dimethylcadaverine via a C-N bond and acylated with 5,5-dimethyl-L-pipecolate. The tetracyclic core is synthesized by the terpene cyclase flvE and the cytochrome P450 monooxygenase flvD. The terpene cyclase flvE catalyzes the cyclization of farnesyl pyrophosphate (FPP) to form (1R,4R,5S)-(+)-acoradiene and the cytochrome P450 monooxygenase flvD is then responsible for oxidative conversion of (1R,4R,5S)-(+)-acoradiene into the tetracyclic cage present in the final product flavunoidine. In parallel, the N-methyltransferase flvH dimethylates L-lysine to give N,N-dimethyl-L-Lysin which is decarboxylated by flvG to afford dimethylcadaverine. The terpene cyclase-like protein flvF is the enzyme that attaches the dimethylcadaverine precusor at the C-7 of the tetracyclic cage to yield pre-flavunoidine. The cytochrome monooxygenase flvC hydroxylates the C-10 position of pre-flavunoidine whereas the NRPS flvI acylates the terpenoid core at the hydroxylated C-10 with dimethylpipecolate to yield final flavunoidine. The bifunctional enzyme flvA and the dehydrogenase flvB are responsible for the synthesis of the dimethylpipecolate precursor. The PLP-dependent lyase domain of flvA might use L-O-acetyl-homoserine and alpha-keto-isovalerate to form an intermediary ketone that can cyclize intramolecularly to yield an imine. The imine can be reduced by flvB to yield the 6-carboxylated pipecolate. The C-terminal alpha-KG-dependent oxygenase domain of flvA is then proposed to catalyze the decarboxylation to yield dimethylpipecolate. This is Terpene cyclase-like protein flvF from Aspergillus flavus (strain ATCC 200026 / FGSC A1120 / IAM 13836 / NRRL 3357 / JCM 12722 / SRRC 167).